The sequence spans 166 residues: Phospholipase A2 inhibitor clone 02/03/06/07 (166 aa).

Residues 1–19 form the signal peptide; sequence MRLILLSGLLLLGTFLANG. The C-type lectin domain maps to 46 to 161; the sequence is LKHAFLTVHK…CDDNLLVVCE (116 aa). Cystine bridges form between C83-C160 and C138-C152. The N-linked (GlcNAc...) asparagine glycan is linked to N122.

The protein belongs to the alpha-type phospholipase A2 inhibitor family. As to quaternary structure, homotrimer; non-covalently linked. As to expression, expressed by the liver.

It localises to the secreted. Its function is as follows. This phospholipase A2 inhibitor binds directly phospholipase A2 in the presence or absence of calcium. The chain is Phospholipase A2 inhibitor clone 02/03/06/07 from Lachesis muta muta (Bushmaster).